Consider the following 185-residue polypeptide: Ribosome-recycling factor (185 aa).

It belongs to the RRF family.

It localises to the cytoplasm. Responsible for the release of ribosomes from messenger RNA at the termination of protein biosynthesis. May increase the efficiency of translation by recycling ribosomes from one round of translation to another. This is Ribosome-recycling factor from Ehrlichia ruminantium (strain Gardel).